Here is a 287-residue protein sequence, read N- to C-terminus: Acetyl-coenzyme A carboxylase carboxyl transferase subunit beta (287 aa).

A CoA carboxyltransferase N-terminal domain is found at 28–287 (LWKKCPKCEN…ILSLLTNKVA (260 aa)). Zn(2+) contacts are provided by Cys32, Cys35, Cys51, and Cys54. A C4-type zinc finger spans residues 32 to 54 (CPKCENVLYRPELEKNLDVCPKC).

This sequence belongs to the AccD/PCCB family. Acetyl-CoA carboxylase is a heterohexamer composed of biotin carboxyl carrier protein (AccB), biotin carboxylase (AccC) and two subunits each of ACCase subunit alpha (AccA) and ACCase subunit beta (AccD). The cofactor is Zn(2+).

It localises to the cytoplasm. It catalyses the reaction N(6)-carboxybiotinyl-L-lysyl-[protein] + acetyl-CoA = N(6)-biotinyl-L-lysyl-[protein] + malonyl-CoA. Its pathway is lipid metabolism; malonyl-CoA biosynthesis; malonyl-CoA from acetyl-CoA: step 1/1. Component of the acetyl coenzyme A carboxylase (ACC) complex. Biotin carboxylase (BC) catalyzes the carboxylation of biotin on its carrier protein (BCCP) and then the CO(2) group is transferred by the transcarboxylase to acetyl-CoA to form malonyl-CoA. The polypeptide is Acetyl-coenzyme A carboxylase carboxyl transferase subunit beta (Marinomonas sp. (strain MWYL1)).